The sequence spans 1298 residues: Histone-lysine N-methyltransferase EHMT1 (1298 aa).

Disordered regions lie at residues 1–111 (MAAA…HVTA) and 144–192 (ASSL…RKLP). Residue A2 is modified to N-acetylalanine. K22 is covalently cross-linked (Glycyl lysine isopeptide (Lys-Gly) (interchain with G-Cter in SUMO1); alternate). A Glycyl lysine isopeptide (Lys-Gly) (interchain with G-Cter in SUMO2); alternate cross-link involves residue K22. Residues 38-50 (SAEKQAGEAHMAA) show a composition bias toward basic and acidic residues. Composition is skewed to polar residues over residues 54–67 (TNGSCENSDASSHA) and 76–89 (SARVNPQDGTNTLT). Basic and acidic residues predominate over residues 96–105 (VSERDSEAAK). Glycyl lysine isopeptide (Lys-Gly) (interchain with G-Cter in SUMO2) cross-links involve residues K190, K199, K231, K234, K317, and K327. A disordered region spans residues 211-234 (VVGLHAASKDPREVREARDHKEPK). Residues 217–234 (ASKDPREVREARDHKEPK) show a composition bias toward basic and acidic residues. The disordered stretch occupies residues 339–479 (VNGESLEMDS…QTAPGDSTGY (141 aa)). Over residues 344-360 (LEMDSDEDDSEELEEDD) the composition is skewed to acidic residues. Residues 373–393 (EDSRTSKESMSEADRAQKMDG) are compositionally biased toward basic and acidic residues. Acidic residues predominate over residues 394 to 416 (ESEEEQESVDTGEEEEGGDESDL). Residue K432 forms a Glycyl lysine isopeptide (Lys-Gly) (interchain with G-Cter in SUMO2) linkage. Position 435 is a phosphoserine (S435). The segment covering 440-452 (PARKRRRRSRKKP) has biased composition (basic residues). Residues 460 to 474 (SYKSSAGSAEQTAPG) are compositionally biased toward polar residues. Phosphoserine is present on S483. Residues K492, K559, K644, K659, K684, and K731 each participate in a glycyl lysine isopeptide (Lys-Gly) (interchain with G-Cter in SUMO2) cross-link. A disordered region spans residues 644-717 (KADTTSTVTP…TPGLSQGPGK (74 aa)). ANK repeat units follow at residues 737 to 766 (FHPKQLYFSARQGELQKVLLMLVDGIDPNF), 772 to 801 (NKRSPLHAAAEAGHVDICHMLVQAGANIDT), 805 to 834 (DQRTPLMEAAENNHLEAVKYLIKAGALVDP), 838 to 868 (EGSTCLHLAAKKGHYEVVQYLLSNGQMDVNC), 872 to 901 (GGWTPMIWATEYKHVDLVKLLLSKGSDINI), 905 to 934 (EENICLHWAAFSGCVDIAEILLAAKCDLHA), 938 to 967 (HGDSPLHIAARENRYDCVVLFLSRDSDVTL), and 971 to 1004 (EGETPLQCASLNSQVWSALQMSKALQDSAPDRPS). The segment at 905 to 907 (EEN) is histone H3K9me binding. S1004 and S1048 each carry phosphoserine. A Pre-SET domain is found at 1060 to 1123 (QYCVCIDDCS…NCRNRVVQNG (64 aa)). 9 residues coordinate Zn(2+): C1062, C1064, C1068, C1073, C1075, C1105, C1109, C1111, and C1115. One can recognise an SET domain in the interval 1126-1243 (ARLQLYRTRD…AGEQLGFDYG (118 aa)). S-adenosyl-L-methionine contacts are provided by residues 1136-1138 (MGW), Y1173, and 1200-1201 (NH). The segment at 1162–1181 (DSEADVREEDSYLFDLDNKD) is interaction with histone H3. C1203 provides a ligand contact to Zn(2+). An interaction with histone H3 region spans residues 1242 to 1245 (YGER). C1256 serves as a coordination point for Zn(2+). R1257 contributes to the S-adenosyl-L-methionine binding site. 2 residues coordinate Zn(2+): C1258 and C1263. Residues 1274 to 1298 (QASAAQEAQEDGLPDTSSAAAADPL) are disordered.

The protein belongs to the class V-like SAM-binding methyltransferase superfamily. As to quaternary structure, heterodimer; heterodimerizes with EHMT2. Interacts with WIZ and EHMT2. Part of the E2F6.com-1 complex in G0 phase composed of E2F6, MGA, MAX, TFDP1, CBX3, BAT8, EHMT1, RING1, RNF2, MBLR, L3MBTL2 and YAF2. Interacts (via ANK repeats) with RELA (when monomethylated at 'Lys-310'). Interacts with MPHOSPH8. Interacts with CDYL. Interacts with REST only in the presence of CDYL. Part of a complex containing at least CDYL, REST, WIZ, SETB1, EHMT1 and EHMT2. Interacts with BAZ2B. In terms of tissue distribution, widely expressed.

It is found in the nucleus. The protein resides in the chromosome. The catalysed reaction is N(6)-methyl-L-lysyl(9)-[histone H3] + S-adenosyl-L-methionine = N(6),N(6)-dimethyl-L-lysyl(9)-[histone H3] + S-adenosyl-L-homocysteine + H(+). It catalyses the reaction L-lysyl(9)-[histone H3] + S-adenosyl-L-methionine = N(6)-methyl-L-lysyl(9)-[histone H3] + S-adenosyl-L-homocysteine + H(+). With respect to regulation, methyltransferase activity is inhibited by BIX-01294. Efficiently inhibited by compound E72, a BIX-01294 derivative in which the diazepane ring and the benzyl are replaced with a 3-dimethylaminopropyl and a 5-aminopentyl group at sites B and C, respectively. Functionally, histone methyltransferase that specifically mono- and dimethylates 'Lys-9' of histone H3 (H3K9me1 and H3K9me2, respectively) in euchromatin. H3K9me represents a specific tag for epigenetic transcriptional repression by recruiting HP1 proteins to methylated histones. Also weakly methylates 'Lys-27' of histone H3 (H3K27me). Also required for DNA methylation, the histone methyltransferase activity is not required for DNA methylation, suggesting that these 2 activities function independently. Probably targeted to histone H3 by different DNA-binding proteins like E2F6, MGA, MAX and/or DP1. During G0 phase, it probably contributes to silencing of MYC- and E2F-responsive genes, suggesting a role in G0/G1 transition in cell cycle. In addition to the histone methyltransferase activity, also methylates non-histone proteins: mediates dimethylation of 'Lys-373' of p53/TP53. Represses the expression of mitochondrial function-related genes, perhaps by occupying their promoter regions, working in concert with probable chromatin reader BAZ2B. The chain is Histone-lysine N-methyltransferase EHMT1 (EHMT1) from Homo sapiens (Human).